The chain runs to 668 residues: DNA ligase (668 aa).

NAD(+) is bound by residues 37-41 (DNVYD), 86-87 (SM), and E116. The active-site N6-AMP-lysine intermediate is the K118. The NAD(+) site is built by R139, E173, K288, and K312. The Zn(2+) site is built by C406, C409, C424, and C429. The BRCT domain maps to 591 to 668 (IPDNPFKDKT…TEEEAIAQIK (78 aa)).

Belongs to the NAD-dependent DNA ligase family. LigA subfamily. Mg(2+) serves as cofactor. It depends on Mn(2+) as a cofactor.

It carries out the reaction NAD(+) + (deoxyribonucleotide)n-3'-hydroxyl + 5'-phospho-(deoxyribonucleotide)m = (deoxyribonucleotide)n+m + AMP + beta-nicotinamide D-nucleotide.. In terms of biological role, DNA ligase that catalyzes the formation of phosphodiester linkages between 5'-phosphoryl and 3'-hydroxyl groups in double-stranded DNA using NAD as a coenzyme and as the energy source for the reaction. It is essential for DNA replication and repair of damaged DNA. The polypeptide is DNA ligase (Lactobacillus acidophilus (strain ATCC 700396 / NCK56 / N2 / NCFM)).